Consider the following 214-residue polypeptide: Ras-like protein rasZ (214 aa).

16–23 (GDGGVGKT) is a GTP binding site. The short motif at 38 to 46 (YDPTIEDSY) is the Effector region element. GTP contacts are provided by residues 63–67 (DTAGQ) and 122–125 (NKSD). Residue Cys-211 is modified to Cysteine methyl ester. The S-geranylgeranyl cysteine moiety is linked to residue Cys-211. Residues 212-214 (KMM) constitute a propeptide, removed in mature form.

This sequence belongs to the small GTPase superfamily. Ras family.

The protein localises to the cell membrane. The enzyme catalyses GTP + H2O = GDP + phosphate + H(+). Functionally, ras proteins bind GDP/GTP and possess intrinsic GTPase activity. This Dictyostelium discoideum (Social amoeba) protein is Ras-like protein rasZ (rasZ).